We begin with the raw amino-acid sequence, 125 residues long: Small ribosomal subunit protein uS12 (125 aa).

Position 89 is a 3-methylthioaspartic acid (D89). Residues 106-125 form a disordered region; the sequence is GVKDRKQSRSKYGAKRPKKA. The span at 113–125 shows a compositional bias: basic residues; that stretch reads SRSKYGAKRPKKA.

The protein belongs to the universal ribosomal protein uS12 family. Part of the 30S ribosomal subunit. Contacts proteins S8 and S17. May interact with IF1 in the 30S initiation complex.

In terms of biological role, with S4 and S5 plays an important role in translational accuracy. Interacts with and stabilizes bases of the 16S rRNA that are involved in tRNA selection in the A site and with the mRNA backbone. Located at the interface of the 30S and 50S subunits, it traverses the body of the 30S subunit contacting proteins on the other side and probably holding the rRNA structure together. The combined cluster of proteins S8, S12 and S17 appears to hold together the shoulder and platform of the 30S subunit. The polypeptide is Small ribosomal subunit protein uS12 (Azoarcus sp. (strain BH72)).